The sequence spans 1687 residues: Helicase sen1 (1687 aa).

Residues 781 to 801 form a disordered region; the sequence is VIKPSPTPQITVKQNTTKSSS. Over residues 788 to 801 the composition is skewed to polar residues; it reads PQITVKQNTTKSSS. Residues Gln1134, 1155–1159, Gln1407, Tyr1445, and Glu1574 each bind ATP; that span reads GTGKT. The interval 1661-1687 is disordered; it reads MKNEEFVEPPSKKLANSEPSKEIRQRS.

Belongs to the DNA2/NAM7 helicase family. In terms of assembly, monomer.

The protein resides in the nucleus. Its function is as follows. ATP-dependent 5'-&gt;3' DNA/RNA helicase required for the expression and maturation of diverse classes of non-protein-coding RNAs like precursor tRNAs, rRNAs and small nuclear (snRNA) and nucleolar (snoRNA) RNAs. Directs RNA polymerase II transcription termination on snoRNAs as well as on several short protein-coding genes. May also play a role in transcription-coupled nucleotide excision repair. In Schizosaccharomyces pombe (strain 972 / ATCC 24843) (Fission yeast), this protein is Helicase sen1 (sen1).